Reading from the N-terminus, the 273-residue chain is 2-dehydro-3-deoxyphosphooctonate aldolase (273 aa).

The protein belongs to the KdsA family.

The protein resides in the cytoplasm. It catalyses the reaction D-arabinose 5-phosphate + phosphoenolpyruvate + H2O = 3-deoxy-alpha-D-manno-2-octulosonate-8-phosphate + phosphate. The protein operates within carbohydrate biosynthesis; 3-deoxy-D-manno-octulosonate biosynthesis; 3-deoxy-D-manno-octulosonate from D-ribulose 5-phosphate: step 2/3. It functions in the pathway bacterial outer membrane biogenesis; lipopolysaccharide biosynthesis. This chain is 2-dehydro-3-deoxyphosphooctonate aldolase, found in Desulfatibacillum aliphaticivorans.